Reading from the N-terminus, the 119-residue chain is Large ribosomal subunit protein uL22 (119 aa).

It belongs to the universal ribosomal protein uL22 family. Part of the 50S ribosomal subunit.

In terms of biological role, this protein binds specifically to 23S rRNA; its binding is stimulated by other ribosomal proteins, e.g. L4, L17, and L20. It is important during the early stages of 50S assembly. It makes multiple contacts with different domains of the 23S rRNA in the assembled 50S subunit and ribosome. Functionally, the globular domain of the protein is located near the polypeptide exit tunnel on the outside of the subunit, while an extended beta-hairpin is found that lines the wall of the exit tunnel in the center of the 70S ribosome. This chain is Large ribosomal subunit protein uL22, found in Tropheryma whipplei (strain TW08/27) (Whipple's bacillus).